The sequence spans 700 residues: Acetyl-coenzyme A carboxylase carboxyl transferase subunit beta, chloroplastic (700 aa).

Zn(2+) is bound by residues Cys34, Cys37, Cys53, and Cys56. Residues 34 to 56 form a C4-type zinc finger; that stretch reads CENCETLIYKKSLLEQKGVCAEC. The region spanning 445–700 is the CoA carboxyltransferase N-terminal domain; that stretch reads KKGRDTKDTE…ETIEIYMYGD (256 aa).

The protein belongs to the AccD/PCCB family. In terms of assembly, acetyl-CoA carboxylase is a heterohexamer composed of biotin carboxyl carrier protein, biotin carboxylase and 2 subunits each of ACCase subunit alpha and ACCase plastid-coded subunit beta (accD). It depends on Zn(2+) as a cofactor.

The protein localises to the plastid. Its subcellular location is the chloroplast stroma. It carries out the reaction N(6)-carboxybiotinyl-L-lysyl-[protein] + acetyl-CoA = N(6)-biotinyl-L-lysyl-[protein] + malonyl-CoA. It participates in lipid metabolism; malonyl-CoA biosynthesis; malonyl-CoA from acetyl-CoA: step 1/1. Its function is as follows. Component of the acetyl coenzyme A carboxylase (ACC) complex. Biotin carboxylase (BC) catalyzes the carboxylation of biotin on its carrier protein (BCCP) and then the CO(2) group is transferred by the transcarboxylase to acetyl-CoA to form malonyl-CoA. The protein is Acetyl-coenzyme A carboxylase carboxyl transferase subunit beta, chloroplastic of Cryptomeria japonica (Japanese cedar).